The following is a 216-amino-acid chain: Guanylate kinase (216 aa).

The Guanylate kinase-like domain maps to 15–193 (GNLFMVVAPS…ALEELRNVVR (179 aa)). Residue 22 to 29 (APSGAGKS) participates in ATP binding.

This sequence belongs to the guanylate kinase family.

Its subcellular location is the cytoplasm. The enzyme catalyses GMP + ATP = GDP + ADP. Its function is as follows. Essential for recycling GMP and indirectly, cGMP. The polypeptide is Guanylate kinase (Cupriavidus pinatubonensis (strain JMP 134 / LMG 1197) (Cupriavidus necator (strain JMP 134))).